The following is a 248-amino-acid chain: MGYNKALRYSRHDGTSCVIDNHHLKSLGSVLNDVRHKKDRIREAEYEPILDIANQYMVTEDPFRGPGKNVRITLFKEIRRVQPDTMKLVCNWSGKEFLRETWTRFISEEFPITTDQEIMDLWFEIQLRPMQPNRCYKFTMQYALGANPEYVAHDVIRQQDPYYVGPNNMERINLSKKGFAFPLTCLQSVYNDNFERFFDDILWPYFHRPLVYVGTTSAEIEEIMIEVSLLFKIKEFAPDVPLFTGPAY.

Belongs to the polyhedrin family.

In terms of biological role, component of the virus occlusion bodies, which are large proteinaceous structures, that protect the virus from the outside environment for extended periods until they are ingested by insect larvae. This Choristoneura fumiferana (Spruce budworm moth) protein is Granulin.